A 200-amino-acid chain; its full sequence is Holliday junction branch migration complex subunit RuvA (200 aa).

Residues 1–63 (MYAYIKGTLT…EDAQLLYGFI (63 aa)) are domain I. Residues 64–142 (NQEEKDMFLS…INDVDSSQIL (79 aa)) are domain II. The tract at residues 143–149 (NTDTQDH) is flexible linker. Positions 150–200 (ANAPIIKEALLALEALGYSKRELTKVEKSLSKETFDSVDDAVKRGLQLLIA) are domain III.

This sequence belongs to the RuvA family. Homotetramer. Forms an RuvA(8)-RuvB(12)-Holliday junction (HJ) complex. HJ DNA is sandwiched between 2 RuvA tetramers; dsDNA enters through RuvA and exits via RuvB. An RuvB hexamer assembles on each DNA strand where it exits the tetramer. Each RuvB hexamer is contacted by two RuvA subunits (via domain III) on 2 adjacent RuvB subunits; this complex drives branch migration. In the full resolvosome a probable DNA-RuvA(4)-RuvB(12)-RuvC(2) complex forms which resolves the HJ.

The protein localises to the cytoplasm. Functionally, the RuvA-RuvB-RuvC complex processes Holliday junction (HJ) DNA during genetic recombination and DNA repair, while the RuvA-RuvB complex plays an important role in the rescue of blocked DNA replication forks via replication fork reversal (RFR). RuvA specifically binds to HJ cruciform DNA, conferring on it an open structure. The RuvB hexamer acts as an ATP-dependent pump, pulling dsDNA into and through the RuvAB complex. HJ branch migration allows RuvC to scan DNA until it finds its consensus sequence, where it cleaves and resolves the cruciform DNA. This is Holliday junction branch migration complex subunit RuvA from Staphylococcus saprophyticus subsp. saprophyticus (strain ATCC 15305 / DSM 20229 / NCIMB 8711 / NCTC 7292 / S-41).